We begin with the raw amino-acid sequence, 233 residues long: LOB domain-containing protein 40 (233 aa).

Positions methionine 3 to valine 109 constitute an LOB domain. Over residues lysine 143–serine 160 the composition is skewed to basic and acidic residues. The interval lysine 143–threonine 183 is disordered. A compositionally biased stretch (low complexity) spans histidine 161–glutamate 175.

This sequence belongs to the LOB domain-containing protein family. Expressed in roots and flowers.

The polypeptide is LOB domain-containing protein 40 (LBD40) (Arabidopsis thaliana (Mouse-ear cress)).